Reading from the N-terminus, the 708-residue chain is Metal-pseudopaline receptor CntO (708 aa).

Residues 1–21 (MRVSVSLVLGVGLGCSSPALW) form the signal peptide. Residues 63-169 (RIEDIPQAIS…PGGTVNLVTK (107 aa)) enclose the TBDR plug domain. The region spanning 174 to 708 (ERFARLHASA…NLTMSLTLNY (535 aa)) is the TBDR beta-barrel domain.

The protein belongs to the TonB-dependent receptor family.

Its subcellular location is the cell outer membrane. Functionally, transports the metallophore pseudopaline, which is involved in the acquisition of nickel and zinc, and thus enables bacterial growth inside the host, where metal access is limited. Is probably involved in the import of pseudopaline-metal complexes. The chain is Metal-pseudopaline receptor CntO from Pseudomonas aeruginosa (strain UCBPP-PA14).